A 367-amino-acid chain; its full sequence is Nuclear hormone receptor-like 1 (367 aa).

Residues 32–107 (GQPCVVCGDD…NGMTKSLVLN (76 aa)) constitute a DNA-binding region (nuclear receptor). 2 NR C4-type zinc fingers span residues 35-55 (CVVCGDDATGLHYRAITCEGC) and 71-95 (CKSIERCEISKISRNICQFCRFQKC). An NR LBD domain is found at 145 to 367 (EFQSRIDQVT…IANILLFKFT (223 aa)).

The protein belongs to the nuclear hormone receptor family.

It localises to the nucleus. The chain is Nuclear hormone receptor-like 1 (nhr-1) from Onchocerca volvulus.